A 555-amino-acid chain; its full sequence is Formate--tetrahydrofolate ligase (555 aa).

T65–T72 lines the ATP pocket.

The protein belongs to the formate--tetrahydrofolate ligase family.

The catalysed reaction is (6S)-5,6,7,8-tetrahydrofolate + formate + ATP = (6R)-10-formyltetrahydrofolate + ADP + phosphate. Its pathway is one-carbon metabolism; tetrahydrofolate interconversion. The chain is Formate--tetrahydrofolate ligase from Syntrophomonas wolfei subsp. wolfei (strain DSM 2245B / Goettingen).